Consider the following 1939-residue polypeptide: Myosin-6 (1939 aa).

In terms of domain architecture, Myosin N-terminal SH3-like spans Asp32–Pro81. The Myosin motor domain occupies Asp85–Asp780. Lys129 is subject to N6,N6,N6-trimethyllysine. ATP is bound at residue Gly178–Thr185. Thr379 is subject to Phosphothreonine. Ser417 carries the post-translational modification Phosphoserine. 2 actin-binding regions span residues Leu657 to Glu679 and Lys759 to Gly773. In terms of domain architecture, IQ spans Leu783–Ala812. Positions Leu842–Glu1939 form a coiled coil. A phosphoserine mark is found at Ser1090 and Ser1139. Tyr1261 carries the phosphotyrosine modification. Residue Ser1271 is modified to Phosphoserine. Phosphothreonine is present on residues Thr1277 and Thr1284. The residue at position 1309 (Ser1309) is a Phosphoserine. Tyr1310 bears the Phosphotyrosine mark. Thr1311 bears the Phosphothreonine mark. Ser1512 carries the post-translational modification Phosphoserine. Thr1515 and Thr1681 each carry phosphothreonine. Residues Ala1908–Glu1939 are disordered. The span at Lys1925–Glu1939 shows a compositional bias: basic and acidic residues.

This sequence belongs to the TRAFAC class myosin-kinesin ATPase superfamily. Myosin family. In terms of assembly, muscle myosin is a hexameric protein that consists of 2 heavy chain subunits (MHC), 2 alkali light chain subunits (MLC) and 2 regulatory light chain subunits (MLC-2).

The protein resides in the cytoplasm. The protein localises to the myofibril. In terms of biological role, muscle contraction. The chain is Myosin-6 (MYH6) from Mesocricetus auratus (Golden hamster).